The following is a 128-amino-acid chain: Ribonuclease pancreatic (128 aa).

The segment at 1-25 (KESSAKKFQRQHIDSSGSPSTNPNY) is disordered. Substrate is bound by residues K7 and R10. H12 (proton acceptor) is an active-site residue. Over residues 14 to 25 (DSSGSPSTNPNY) the composition is skewed to polar residues. Cystine bridges form between C26/C84, C40/C95, C58/C110, and C65/C72. N34 carries an N-linked (GlcNAc...) asparagine glycan. Residues 41–45 (KPVNT), K66, and R85 contribute to the substrate site. The Proton donor role is filled by H119.

It belongs to the pancreatic ribonuclease family. As to quaternary structure, monomer. Interacts with and forms tight 1:1 complexes with RNH1. Dimerization of two such complexes may occur. Interaction with RNH1 inhibits this protein. In terms of tissue distribution, pancreas.

Its subcellular location is the secreted. It carries out the reaction an [RNA] containing cytidine + H2O = an [RNA]-3'-cytidine-3'-phosphate + a 5'-hydroxy-ribonucleotide-3'-[RNA].. The enzyme catalyses an [RNA] containing uridine + H2O = an [RNA]-3'-uridine-3'-phosphate + a 5'-hydroxy-ribonucleotide-3'-[RNA].. Its function is as follows. Endonuclease that catalyzes the cleavage of RNA on the 3' side of pyrimidine nucleotides. Acts on single-stranded and double-stranded RNA. This is Ribonuclease pancreatic (RNASE1) from Proechimys guairae (Guaira spiny rat).